A 414-amino-acid polypeptide reads, in one-letter code: Imidazolonepropionase (414 aa).

Fe(3+) is bound by residues His-77 and His-79. Positions 77 and 79 each coordinate Zn(2+). 4-imidazolone-5-propanoate is bound by residues Arg-86, Tyr-149, and His-184. Tyr-149 lines the N-formimidoyl-L-glutamate pocket. A Fe(3+)-binding site is contributed by His-249. His-249 contributes to the Zn(2+) binding site. Glu-252 contributes to the 4-imidazolone-5-propanoate binding site. Residue Asp-323 participates in Fe(3+) binding. Asp-323 contributes to the Zn(2+) binding site. Residues Asn-325 and Gly-327 each contribute to the N-formimidoyl-L-glutamate site. Ser-328 lines the 4-imidazolone-5-propanoate pocket.

It belongs to the metallo-dependent hydrolases superfamily. HutI family. Zn(2+) serves as cofactor. The cofactor is Fe(3+).

Its subcellular location is the cytoplasm. The catalysed reaction is 4-imidazolone-5-propanoate + H2O = N-formimidoyl-L-glutamate. Its pathway is amino-acid degradation; L-histidine degradation into L-glutamate; N-formimidoyl-L-glutamate from L-histidine: step 3/3. Catalyzes the hydrolytic cleavage of the carbon-nitrogen bond in imidazolone-5-propanoate to yield N-formimidoyl-L-glutamate. It is the third step in the universal histidine degradation pathway. This Phocaeicola vulgatus (strain ATCC 8482 / DSM 1447 / JCM 5826 / CCUG 4940 / NBRC 14291 / NCTC 11154) (Bacteroides vulgatus) protein is Imidazolonepropionase.